The sequence spans 228 residues: 2-C-methyl-D-erythritol 4-phosphate cytidylyltransferase (228 aa).

Belongs to the IspD/TarI cytidylyltransferase family. IspD subfamily.

The enzyme catalyses 2-C-methyl-D-erythritol 4-phosphate + CTP + H(+) = 4-CDP-2-C-methyl-D-erythritol + diphosphate. Its pathway is isoprenoid biosynthesis; isopentenyl diphosphate biosynthesis via DXP pathway; isopentenyl diphosphate from 1-deoxy-D-xylulose 5-phosphate: step 2/6. In terms of biological role, catalyzes the formation of 4-diphosphocytidyl-2-C-methyl-D-erythritol from CTP and 2-C-methyl-D-erythritol 4-phosphate (MEP). In Actinobacillus pleuropneumoniae serotype 3 (strain JL03), this protein is 2-C-methyl-D-erythritol 4-phosphate cytidylyltransferase.